We begin with the raw amino-acid sequence, 304 residues long: 15-cis-phytoene synthase (304 aa).

It belongs to the phytoene/squalene synthase family. Requires ATP as cofactor. Mn(2+) serves as cofactor. The cofactor is Mg(2+).

It carries out the reaction 2 (2E,6E,10E)-geranylgeranyl diphosphate = 15-cis-phytoene + 2 diphosphate. The protein operates within carotenoid biosynthesis; astaxanthin biosynthesis. It functions in the pathway carotenoid biosynthesis; phytoene biosynthesis. Its function is as follows. Involved in the biosynthesis of carotenoids for the production of astaxanthin. Catalyzes the condensation of two molecules of geranylgeranyl diphosphate (GGPP) to give prephytoene diphosphate (PPPP) and the subsequent rearrangement of the cyclopropylcarbinyl intermediate to yield 15-cis phytoene. This chain is 15-cis-phytoene synthase (crtB), found in Paracoccus sp. (strain N81106 / MBIC 01143) (Agrobacterium aurantiacum).